Here is a 223-residue protein sequence, read N- to C-terminus: Probable Ras-related protein Rab-4A (223 aa).

16–23 lines the GTP pocket; the sequence is GNAGTGKT. The Effector region signature appears at 38-46; it reads TQHTIGAEF. GTP contacts are provided by residues 64-68 and 122-125; these read DTAGQ and NKKD. Residues C221 and C223 are each lipidated (S-geranylgeranyl cysteine). At C223 the chain carries Cysteine methyl ester.

The protein belongs to the small GTPase superfamily. Rab family.

The protein resides in the cell membrane. Protein transport. Probably involved in vesicular traffic. The chain is Probable Ras-related protein Rab-4A from Echinococcus multilocularis (Fox tapeworm).